Here is a 159-residue protein sequence, read N- to C-terminus: Ribosomal RNA large subunit methyltransferase H (159 aa).

S-adenosyl-L-methionine is bound by residues leucine 76, glycine 108, and 127-132 (FGKLTM).

The protein belongs to the RNA methyltransferase RlmH family. As to quaternary structure, homodimer.

It localises to the cytoplasm. The catalysed reaction is pseudouridine(1915) in 23S rRNA + S-adenosyl-L-methionine = N(3)-methylpseudouridine(1915) in 23S rRNA + S-adenosyl-L-homocysteine + H(+). Its function is as follows. Specifically methylates the pseudouridine at position 1915 (m3Psi1915) in 23S rRNA. This is Ribosomal RNA large subunit methyltransferase H from Lacticaseibacillus casei (strain BL23) (Lactobacillus casei).